The following is a 1410-amino-acid chain: Ribosome-binding protein 1 (1410 aa).

At 1 to 7 (MDIYDTQ) the chain is on the lumenal side. The chain crosses the membrane as a helical span at residues 8–28 (TLGVVVFGGFMVVSAIGIFLV). The Cytoplasmic portion of the chain corresponds to 29-1410 (STFSMKETSY…GSSSKEGTSV (1382 aa)). Disordered stretches follow at residues 44–90 (NQRK…DPAP) and 129–152 (QEKLASSPKDKKKKEKKVAKVEPA). The segment covering 52–63 (THHQKVEKKKKE) has biased composition (basic residues). The span at 64–88 (KTVEKKGKTKKKEEKPNGKIPDHDP) shows a compositional bias: basic and acidic residues. A Glycyl lysine isopeptide (Lys-Gly) (interchain with G-Cter in SUMO2) cross-link involves residue lysine 148. A phosphoserine mark is found at serine 159 and serine 165. Disordered regions lie at residues 173–648 (APKE…PLYL) and 895–925 (QSSHASLRADAEKAQEQQQQMAELHSKLQSS). Composition is skewed to polar residues over residues 191 to 209 (TPATGTTQGKKAEGTQNQS) and 225 to 238 (TPNQGKKTEGTPNQ). Repeat copies occupy residues 197–206 (TQGKKAEGTQ), 207–216 (NQSKKAEGAP), 217–226 (NQGRKAEGTP), 227–236 (NQGKKTEGTP), 237–246 (NQGKKAEGTP), 247–256 (NQGKKAEGTP), 257–266 (NQGKKAEGAQ), 267–276 (NQGKKVDTTP), 277–286 (NQGKKVEGAP), 287–296 (TQGRKAEGAQ), 297–306 (NQAKKVEGAQ), 307–316 (NQGKKAEGAQ), 317–326 (NQGKKGEGAQ), 327–336 (NQGKKAEGAQ), 337–346 (NQGKKAEGAQ), 347–356 (NQGKKAEGAQ), 357–366 (NQGKKAEGAQ), 367–376 (NQGKKAEGAQ), 377–386 (NQGKKAEGAQ), 387–396 (NQGKKVEGAQ), 397–406 (NQGKKAEGAQ), 407–416 (NQGKKAEGAQ), 417–426 (NQGKKAEGAQ), 427–436 (NQGKKAEGAQ), 437–446 (NQGKKAEGAQ), 447–456 (NQGKKAEGAQ), 457–466 (NQGKKAEGAQ), 467–476 (NQGKKVEGAQ), 477–486 (NQGKKAEGAQ), 487–496 (NQGKKAEGAQ), 497–506 (NQGKKAEGAQ), 507–516 (NQGQKGEGAQ), and 517–526 (NQGKKTEGAQ). Residues 197–604 (TQGKKAEGTQ…NQGKKTESAS (408 aa)) are 41 X 10 AA approximate tandem repeats of [TN]-Q-[GSA]-[KRQT]-K-[ATGSV]-[ED]-[GTAS]-[ATIS]-[PQTAS]. 4 positions are modified to phosphothreonine: threonine 225, threonine 235, threonine 245, and threonine 255. Polar residues-rich tracts occupy residues 265–278 (AQNQGKKVDTTPNQ) and 295–519 (AQNQ…QNQG). The span at 520-532 (KKTEGAQGKKAER) shows a compositional bias: basic and acidic residues. One copy of the 34; approximate repeat lies at 527–534 (GKKAERSP). Serine 533 is subject to Phosphoserine. The stretch at 535–544 (NQGKKGEGAP) is repeat 35. A 36; approximate repeat occupies 545 to 554 (IQGKKADSVA). Polar residues predominate over residues 553–567 (VANQGTKVEGITNQG). Repeat copies occupy residues 555 to 564 (NQGTKVEGIT) and 565 to 574 (NQGKKAEGSP). Over residues 568-581 (KKAEGSPSEGKKAE) the composition is skewed to basic and acidic residues. Residues serine 573 and serine 583 each carry the phosphoserine modification. The 39; approximate repeat unit spans residues 575 to 584 (SEGKKAEGSP). 2 consecutive repeat copies span residues 585 to 594 (NQGKKADAAA) and 595 to 604 (NQGKKTESAS). The segment covering 602–612 (SASVQGRNTDV) has biased composition (polar residues). Serine 615 carries the post-translational modification Phosphoserine. Lysine 620 is covalently cross-linked (Glycyl lysine isopeptide (Lys-Gly) (interchain with G-Cter in SUMO1)). The residue at position 900 (serine 900) is a Phosphoserine. Position 932 is an N6-acetyllysine (lysine 932). 2 positions are modified to phosphoserine: serine 959 and serine 978. 4 disordered regions span residues 1093–1122 (GPTLLKHPPAPAEPSSDLASKLREAEETQS), 1260–1287 (EMKSHVEDGDIAGAPASSPEAPPAEQDP), 1330–1362 (EKLRTAGPLESSETEEASQLKERLEKEKKLTSD), and 1378–1410 (QEQLAREKDTVKKLQEQLEKAEDGSSSKEGTSV). Serine 1276 and serine 1277 each carry phosphoserine. 2 stretches are compositionally biased toward basic and acidic residues: residues 1347 to 1360 (SQLKERLEKEKKLT) and 1381 to 1403 (LAREKDTVKKLQEQLEKAEDGSS).

The protein resides in the endoplasmic reticulum membrane. Functionally, acts as a ribosome receptor and mediates interaction between the ribosome and the endoplasmic reticulum membrane. The protein is Ribosome-binding protein 1 (RRBP1) of Homo sapiens (Human).